Consider the following 85-residue polypeptide: Small ribosomal subunit protein uS17 (85 aa).

It belongs to the universal ribosomal protein uS17 family. In terms of assembly, part of the 30S ribosomal subunit.

Its function is as follows. One of the primary rRNA binding proteins, it binds specifically to the 5'-end of 16S ribosomal RNA. The polypeptide is Small ribosomal subunit protein uS17 (Mycoplasmoides gallisepticum (strain R(low / passage 15 / clone 2)) (Mycoplasma gallisepticum)).